The primary structure comprises 567 residues: Thiol:disulfide interchange protein DsbD (567 aa).

The signal sequence occupies residues 1 to 19; it reads MAQRIFTLILLLCSTSAFA. Intrachain disulfides connect C122–C128 and C185–C307. The next 8 membrane-spanning stretches (helical) occupy residues 166–186, 210–230, 246–266, 299–319, 326–346, 360–380, 387–407, and 418–438; these read LPFS…TPCV, LLLA…LGLV, YVLI…FGLF, IAGL…LLYI, WLGG…LMLV, WMAH…VFLL, AWGL…AFIT, and IVQI…QDWA. Residues 435-567 form the Thioredoxin domain; the sequence is QDWAFGSPSA…FSAHLHDRQP (133 aa). C482 and C485 are disulfide-bonded.

It belongs to the thioredoxin family. DsbD subfamily.

It localises to the cell inner membrane. The catalysed reaction is [protein]-dithiol + NAD(+) = [protein]-disulfide + NADH + H(+). It carries out the reaction [protein]-dithiol + NADP(+) = [protein]-disulfide + NADPH + H(+). Required to facilitate the formation of correct disulfide bonds in some periplasmic proteins and for the assembly of the periplasmic c-type cytochromes. Acts by transferring electrons from cytoplasmic thioredoxin to the periplasm. This transfer involves a cascade of disulfide bond formation and reduction steps. The chain is Thiol:disulfide interchange protein DsbD from Salmonella choleraesuis (strain SC-B67).